A 107-amino-acid chain; its full sequence is MHCDIYKFLKHDDMYIYIARPDYPNDTDEIKDWLGVLPKDFRAGLGRSKFVMHLDLATTPTLARVDKEEVLAKLASQGYFVQLPPQDVMRRQAELRARESQDSIYNT.

Residues 1-95 enclose the YcgL domain; sequence MHCDIYKFLK…QDVMRRQAEL (95 aa).

The chain is YcgL domain-containing protein Pcryo_0807 from Psychrobacter cryohalolentis (strain ATCC BAA-1226 / DSM 17306 / VKM B-2378 / K5).